The following is a 180-amino-acid chain: Protein C2-DOMAIN ABA-RELATED 10 (180 aa).

A C2 domain is found at 1 to 105; the sequence is MDQKPLGLLT…EALKMGMELL (105 aa). Positions 22, 23, 28, 74, 75, 76, and 82 each coordinate Ca(2+).

Belongs to the plant CAR protein family. Binds to PYR/PYL/RCAR abscisic acid intracellular receptors in an ABA-independent manner, both at the plasma membrane and in the nucleus.

It is found in the cell membrane. It localises to the nucleus. Stimulates the GTPase/ATPase activities of Obg-like ATPases. Mediates the transient calcium-dependent interaction of PYR/PYL/RCAR abscisic acid (ABA) receptors with the plasma membrane and thus regulates ABA sensitivity. The chain is Protein C2-DOMAIN ABA-RELATED 10 from Arabidopsis thaliana (Mouse-ear cress).